The sequence spans 203 residues: Putative 3-methyladenine DNA glycosylase (203 aa).

Belongs to the DNA glycosylase MPG family.

The polypeptide is Putative 3-methyladenine DNA glycosylase (Mycobacterium tuberculosis (strain ATCC 25177 / H37Ra)).